A 453-amino-acid polypeptide reads, in one-letter code: 13-hydroxylupanine O-tigloyltransferase (453 aa).

Residues His166 and Asp385 each act as proton acceptor in the active site.

Belongs to the plant acyltransferase family. In terms of assembly, monomer. As to expression, expressed in roots and hypocotyls. Detected in seeds, leaves and cotyledons, but not in young developing leaves.

The catalysed reaction is 13-hydroxylupanine + (2E)-2-methylbut-2-enoyl-CoA = 13-(2-methylcrotonoyloxy)lupanine + CoA. Inhibited by N-ethylmaleimide, p-chloromercuribenzoic acid and diethylpyrocarbonate (DEPC). Functionally, acyl-CoA-dependent acyltransferase involved in the synthesis of lupanine alkaloids. Can use both (-)-13alpha-hydroxymultiflorine and (+)-13alpha-hydroxylupanine as substrates. Lower activity with (-)-3beta, 13alpha-dihydroxylupanine, but no activity with (+)-epilupinine and (-)-lupinine as substrates. Tigloyl-CoA, benzoyl-CoA and, more slowly, acetyl-CoA, propionyl-CoA and 2-butenoyl-CoA can act as acyl donors. The chain is 13-hydroxylupanine O-tigloyltransferase (HMT/HLT) from Lupinus albus (White lupine).